The chain runs to 162 residues: Globin CTT-VIIB-7 (162 aa).

The first 16 residues, 1-16 (MKFFAVLALCVVGAIA), serve as a signal peptide directing secretion. Positions 18-162 (PLSADEANLV…TYAVALKSLE (145 aa)) constitute a Globin domain. Heme b contacts are provided by His76 and His111.

It belongs to the globin family. As to quaternary structure, homodimer.

The chain is Globin CTT-VIIB-7 (CTT-7B7) from Chironomus thummi piger (Midge).